A 116-amino-acid chain; its full sequence is Flagellar transcriptional regulator FlhD (116 aa).

The protein belongs to the FlhD family. In terms of assembly, homodimer; disulfide-linked. Forms a heterohexamer composed of two FlhC and four FlhD subunits. Each FlhC binds a FlhD dimer, forming a heterotrimer, and a hexamer assembles by dimerization of two heterotrimers.

It localises to the cytoplasm. Functionally, functions in complex with FlhC as a master transcriptional regulator that regulates transcription of several flagellar and non-flagellar operons by binding to their promoter region. Activates expression of class 2 flagellar genes, including fliA, which is a flagellum-specific sigma factor that turns on the class 3 genes. Also regulates genes whose products function in a variety of physiological pathways. The sequence is that of Flagellar transcriptional regulator FlhD from Proteus mirabilis (strain HI4320).